A 227-amino-acid polypeptide reads, in one-letter code: Chalcone--flavanone isomerase (227 aa).

Positions 50, 115, and 192 each coordinate substrate.

This sequence belongs to the chalcone isomerase family. As to expression, fibers.

The enzyme catalyses a chalcone = a flavanone.. The protein operates within secondary metabolite biosynthesis; flavonoid biosynthesis. Catalyzes the intramolecular cyclization of bicyclic chalcones into tricyclic (S)-flavanones. Responsible for the isomerization of 4,2',4',6'-tetrahydroxychalcone (also termed chalcone) into naringenin. The polypeptide is Chalcone--flavanone isomerase (CHI) (Gossypium hirsutum (Upland cotton)).